Consider the following 616-residue polypeptide: Cleavage stimulation factor subunit 2 tau variant (616 aa).

Residues 16–94 (RSVFVGNIPY…RALRVDNAAS (79 aa)) enclose the RRM domain. 2 disordered regions span residues 203–241 (GKSQ…QPQH) and 262–418 (IPAP…SRAM). 2 stretches are compositionally biased toward low complexity: residues 223–233 (PGPNVLLNQQN) and 319–331 (VTPG…GLLG). Position 320 is a phosphothreonine (Thr-320). A compositionally biased stretch (basic and acidic residues) spans 368–381 (SGHDTRGPSSHEMR). One copy of the 1-1 repeat lies at 418-422 (METRA). The tract at residues 418–462 (METRAMETEVLETRVMERRGMETCAMETRGMEARGMDARGLEMRG) is 9 X 5 AA tandem repeats of M-E-T-R-[AG]. The stretch at 423 to 427 (METEV) is one 1-2; approximate repeat. The 1-3; approximate repeat unit spans residues 428-432 (LETRV). A 1-4; approximate repeat occupies 433–437 (MERRG). One copy of the 1-5; approximate repeat lies at 438 to 442 (METCA). A 1-6 repeat occupies 443–447 (METRG). The stretch at 448 to 452 (MEARG) is one 1-7; approximate repeat. The 1-8; approximate repeat unit spans residues 453–457 (MDARG). The stretch at 458-462 (LEMRG) is one 1-9; approximate repeat. 4 tandem repeats follow at residues 505–509 (GAGMQ), 510–514 (GTGIQ), 515–519 (GTGMQ), and 520–524 (GAGIQ). Residues 505 to 549 (GAGMQGTGIQGTGMQGAGIQGGGMQGAGIQGVSIQGGGIQGGGIQ) form a 9 X 5 AA tandem repeats of G-[AT]-G-[MI]-Q region. A 2-5; approximate repeat occupies 525-529 (GGGMQ). Residues 530–534 (GAGIQ) form a 2-6 repeat. Residues 535-539 (GVSIQ) form a 2-7; approximate repeat. The 2-8; approximate repeat unit spans residues 540-544 (GGGIQ). The segment at 542–573 (GIQGGGIQGASKQGGSQPSSFSPGQSQVTPQD) is disordered. Residues 545–549 (GGGIQ) form a 2-9; approximate repeat. A compositionally biased stretch (low complexity) spans 550–568 (GASKQGGSQPSSFSPGQSQ). Position 563 is a phosphoserine (Ser-563).

It is found in the nucleus. Its function is as follows. May play a significant role in AAUAAA-independent mRNA polyadenylation in germ cells. Directly involved in the binding to pre-mRNAs. This Homo sapiens (Human) protein is Cleavage stimulation factor subunit 2 tau variant (CSTF2T).